The primary structure comprises 101 residues: Apolipoprotein C-III (101 aa).

The signal sequence occupies residues 1-20 (MQPRMLLIVALVALLASARA). Methionine sulfoxide is present on Met-64. Residues 69–101 (KSLKGYWSKFTDKFTGLWESGPEDQLTTPTLEP) are lipid-binding. O-linked (GalNAc...) threonine glycosylation occurs at Thr-96.

The protein belongs to the apolipoprotein C3 family. In terms of processing, the most abundant glycoforms are characterized by an O-linked disaccharide galactose linked to N-acetylgalactosamine (Gal-GalNAc), further modified with up to 3 sialic acid residues. Less abundant glycoforms are characterized by more complex and fucosylated glycan moieties. O-glycosylated on Thr-96 with a core 1 or possibly core 8 glycan. Synthesized predominantly in liver and to a lesser degree in intestine.

The protein localises to the secreted. Its function is as follows. Component of triglyceride-rich very low density lipoproteins (VLDL) and high density lipoproteins (HDL) in plasma. Plays a multifaceted role in triglyceride homeostasis. Intracellularly, promotes hepatic very low density lipoprotein 1 (VLDL1) assembly and secretion; extracellularly, attenuates hydrolysis and clearance of triglyceride-rich lipoproteins (TRLs). Impairs the lipolysis of TRLs by inhibiting lipoprotein lipase and the hepatic uptake of TRLs by remnant receptors. Formed of several curved helices connected via semiflexible hinges, so that it can wrap tightly around the curved micelle surface and easily adapt to the different diameters of its natural binding partners. This is Apolipoprotein C-III (Apoc3) from Rattus norvegicus (Rat).